The primary structure comprises 359 residues: Large ribosomal subunit protein bL27m (359 aa).

The N-terminal 24 residues, 1-24, are a transit peptide targeting the mitochondrion; the sequence is MSFWKVATLWQMPLRPSILVQVRT. Residues 29–48 are disordered; the sequence is AAGSRTSMKDSAGRRLGPKK. A compositionally biased stretch (basic and acidic residues) spans 35–48; the sequence is SMKDSAGRRLGPKK.

It belongs to the bacterial ribosomal protein bL27 family.

Its subcellular location is the mitochondrion. In terms of biological role, component of the large subunit of mitochondrial ribosome. In Eremothecium gossypii (strain ATCC 10895 / CBS 109.51 / FGSC 9923 / NRRL Y-1056) (Yeast), this protein is Large ribosomal subunit protein bL27m (MRPL2).